The following is a 279-amino-acid chain: Protein phosphatase 1 regulatory subunit 3E (279 aa).

Residues Ser16 and Ser33 each carry the phosphoserine modification. Positions 28–87 are disordered; the sequence is RSQRPSLEEESEEEPGEGGTRPGARSRAHVPGRGRRARSAPAGGGGARTARSRSPDTRKR. Over residues 51–65 the composition is skewed to basic residues; it reads ARSRAHVPGRGRRAR. Ser66 carries the phosphoserine modification. Positions 87–90 match the PP1-binding motif motif; sequence RVRF. The region spanning 154 to 259 is the CBM21 domain; sequence AARLQAQRIC…NNGGRDYALL (106 aa). Positions 176–198 are glycogen-binding motif; that stretch reads GSARVLDLAYEKRVSVRWSADGW. The tract at residues 248 to 256 is substrate-binding motif; sequence WDNNGGRDY.

Acts as a glycogen-targeting subunit for PP1. PP1 is involved in glycogen metabolism and contributes to the activation of glycogen synthase leading to an increase in glycogen synthesis. In Mus musculus (Mouse), this protein is Protein phosphatase 1 regulatory subunit 3E (Ppp1r3e).